A 123-amino-acid chain; its full sequence is Prismalin-14 (123 aa).

The N-terminal stretch at 1 to 16 (MRSLLVLLALAACASA) is a signal peptide.

Prismatic layer of shell (at protein level). Expressed primarily in the mantle with highest level in the mantle edge and lower level in the mantle pallium.

It localises to the secreted. Functionally, may be involved in calcification of the prismatic layer of the shell. This is Prismalin-14 from Margaritifera margaritifera (Freshwater pearl mussel).